A 339-amino-acid chain; its full sequence is Serine/threonine-protein kinase SAPK2 (339 aa).

In terms of domain architecture, Protein kinase spans 4-260 (YEVIKDIGSG…IPEIKNHPWF (257 aa)). Residues 10–18 (IGSGNFGVA) and Lys33 each bind ATP. Asp123 acts as the Proton acceptor in catalysis. A C-terminal region spans residues 253–339 (EIKNHPWFLK…EDSGDFVCAL (87 aa)).

Belongs to the protein kinase superfamily. Ser/Thr protein kinase family. Post-translationally, phosphorylated.

The enzyme catalyses L-seryl-[protein] + ATP = O-phospho-L-seryl-[protein] + ADP + H(+). It catalyses the reaction L-threonyl-[protein] + ATP = O-phospho-L-threonyl-[protein] + ADP + H(+). May play a role in signal transduction of hyperosmotic response. Can phosphorylate BZIP46 in vitro. The polypeptide is Serine/threonine-protein kinase SAPK2 (SAPK2) (Oryza sativa subsp. indica (Rice)).